Here is a 1368-residue protein sequence, read N- to C-terminus: DNA-directed RNA polymerase subunit beta (1368 aa).

The protein belongs to the RNA polymerase beta chain family. As to quaternary structure, the RNAP catalytic core consists of 2 alpha, 1 beta, 1 beta' and 1 omega subunit. When a sigma factor is associated with the core the holoenzyme is formed, which can initiate transcription.

It carries out the reaction RNA(n) + a ribonucleoside 5'-triphosphate = RNA(n+1) + diphosphate. Its function is as follows. DNA-dependent RNA polymerase catalyzes the transcription of DNA into RNA using the four ribonucleoside triphosphates as substrates. This is DNA-directed RNA polymerase subunit beta from Cupriavidus taiwanensis (strain DSM 17343 / BCRC 17206 / CCUG 44338 / CIP 107171 / LMG 19424 / R1) (Ralstonia taiwanensis (strain LMG 19424)).